The chain runs to 752 residues: Coiled-coil domain-containing protein 157 (752 aa).

The segment covering 135–154 (QQPLPQKGANQRETPTSKPT) has biased composition (polar residues). 2 disordered regions span residues 135–163 (QQPL…ARSP) and 316–336 (QALK…EQCL). Coiled-coil stretches lie at residues 276–544 (AAEQ…LLVA) and 579–615 (DHME…VAQQ). Basic and acidic residues predominate over residues 316–329 (QALKQEQGARRRQA). Disordered stretches follow at residues 620–707 (LIPQ…QPSK) and 731–752 (RKRL…ERPM). Residues 628–648 (SPSSKGTQGATPPVQAKSTSP) show a composition bias toward polar residues. Residues 671–692 (TSPPRQPCTSPPRQPCTSPPRQ) show a composition bias toward pro residues. The segment covering 693–707 (PCTSPSRQPCSQPSK) has biased composition (polar residues).

This chain is Coiled-coil domain-containing protein 157 (CCDC157), found in Homo sapiens (Human).